The sequence spans 204 residues: Tetraspanin-13 (204 aa).

Residues 1–19 (MVCGGFACSKNCLCALNLL) lie on the Cytoplasmic side of the membrane. Residues 20–40 (YTLVSLLLIGIAAWGIGFGLI) form a helical membrane-spanning segment. Topologically, residues 41–44 (SSLR) are extracellular. Residues 45 to 65 (VVGVVIAVGIFLFLIALVGLI) traverse the membrane as a helical segment. Residues 66–72 (GAVKHHQ) lie on the Cytoplasmic side of the membrane. The chain crosses the membrane as a helical span at residues 73-93 (VLLFFYMIILLLVFIVQFSVS). Topologically, residues 94 to 167 (CACLALNQEQ…IGRYAGEVLR (74 aa)) are extracellular. Residues Asn-113 and Asn-137 are each glycosylated (N-linked (GlcNAc...) asparagine). At Ser-143 the chain carries Phosphoserine. The chain crosses the membrane as a helical span at residues 168-188 (FVGGIGLFFSFTEILGVWLTY). The Cytoplasmic segment spans residues 189–204 (RYRNQKDPRANPSAFL).

It belongs to the tetraspanin (TM4SF) family.

The protein resides in the membrane. The protein is Tetraspanin-13 (TSPAN13) of Bos taurus (Bovine).